The sequence spans 404 residues: Multidrug resistance protein MdtG (404 aa).

Helical transmembrane passes span 19–39 (LGCF…PLYV), 56–76 (LVFS…GGLA), 90–110 (LGMA…QFLI), 113–133 (ALLG…ATQV), 144–164 (TLST…GLLA), 171–191 (PVFF…FFFI), 222–242 (LFVT…ILTL), 254–274 (IAFI…LSAP), 288–308 (ILIV…FVQT), 317–337 (FLLG…LVYN), and 376–396 (AVFC…WNSL).

The protein belongs to the major facilitator superfamily. DHA1 family. MdtG (TC 2.A.1.2.20) subfamily.

The protein resides in the cell inner membrane. In Salmonella heidelberg (strain SL476), this protein is Multidrug resistance protein MdtG.